Consider the following 374-residue polypeptide: DNA integrity scanning protein DisA (374 aa).

In terms of domain architecture, DAC spans 20–158 (DGLMRASLSA…DGQRRVLEDS (139 aa)). ATP-binding positions include Gly87, Leu105, and 118–122 (TRHRT).

Belongs to the DisA family. In terms of assembly, homooctamer. Interacts with RadA. It depends on Mg(2+) as a cofactor.

The catalysed reaction is 2 ATP = 3',3'-c-di-AMP + 2 diphosphate. Its activity is regulated as follows. Diadenylate cyclase activity is inhibited by the interaction with RadA. Participates in a DNA-damage check-point that is active prior to asymmetric division when DNA is damaged. DisA forms globular foci that rapidly scan along the chromosomes during sporulation, searching for lesions. When a lesion is present, DisA pauses at the lesion site. This triggers a cellular response that culminates in a temporary block in sporulation initiation. Its function is as follows. Also has diadenylate cyclase activity, catalyzing the condensation of 2 ATP molecules into cyclic di-AMP (c-di-AMP). c-di-AMP acts as a signaling molecule that couples DNA integrity with progression of sporulation. The rise in c-di-AMP level generated by DisA while scanning the chromosome, operates as a positive signal that advances sporulation; upon encountering a lesion, the DisA focus arrests at the damaged site and halts c-di-AMP synthesis. The sequence is that of DNA integrity scanning protein DisA from Streptomyces coelicolor (strain ATCC BAA-471 / A3(2) / M145).